A 121-amino-acid chain; its full sequence is Small ribosomal subunit protein bS6 (121 aa).

The disordered stretch occupies residues 96 to 121 (DTGPSSMMKTVEREDARKTQQAEYQA). Over residues 105-115 (TVEREDARKTQ) the composition is skewed to basic and acidic residues.

The protein belongs to the bacterial ribosomal protein bS6 family.

Binds together with bS18 to 16S ribosomal RNA. This is Small ribosomal subunit protein bS6 from Albidiferax ferrireducens (strain ATCC BAA-621 / DSM 15236 / T118) (Rhodoferax ferrireducens).